We begin with the raw amino-acid sequence, 460 residues long: Argininosuccinate lyase (460 aa).

This sequence belongs to the lyase 1 family. Argininosuccinate lyase subfamily.

It localises to the cytoplasm. The catalysed reaction is 2-(N(omega)-L-arginino)succinate = fumarate + L-arginine. It participates in amino-acid biosynthesis; L-arginine biosynthesis; L-arginine from L-ornithine and carbamoyl phosphate: step 3/3. The chain is Argininosuccinate lyase from Buchnera aphidicola subsp. Cinara cedri (strain Cc).